The following is a 186-amino-acid chain: C-type lectin 37Da (186 aa).

The N-terminal stretch at 1–20 (MLKTLVQLFLVVAGFAPGFG) is a signal peptide. 2 N-linked (GlcNAc...) asparagine glycosylation sites follow: N35 and N47. Positions 46 to 169 (INESYYVFGQ…CHNHASSLFK (124 aa)) constitute a C-type lectin domain. The cysteines at positions 140 and 160 are disulfide-linked.

Its subcellular location is the secreted. In terms of biological role, galactose-specific lectin that displays calcium-dependent activity. Binds to the surface of hemocytes and enhances hemocyte encapsulation and melanization. This is likely by interacting with carbohydrates on the surface of the hemocytes. Also displays agglutination activity against the Gram-negative bacterium E.coli. This is C-type lectin 37Da from Drosophila melanogaster (Fruit fly).